A 398-amino-acid polypeptide reads, in one-letter code: tRNA(Ile)-lysidine synthase (398 aa).

Position 17 to 22 (17 to 22 (SGGPDS)) interacts with ATP.

The protein belongs to the tRNA(Ile)-lysidine synthase family.

Its subcellular location is the cytoplasm. It carries out the reaction cytidine(34) in tRNA(Ile2) + L-lysine + ATP = lysidine(34) in tRNA(Ile2) + AMP + diphosphate + H(+). Its function is as follows. Ligates lysine onto the cytidine present at position 34 of the AUA codon-specific tRNA(Ile) that contains the anticodon CAU, in an ATP-dependent manner. Cytidine is converted to lysidine, thus changing the amino acid specificity of the tRNA from methionine to isoleucine. The chain is tRNA(Ile)-lysidine synthase from Mesoplasma florum (strain ATCC 33453 / NBRC 100688 / NCTC 11704 / L1) (Acholeplasma florum).